Consider the following 513-residue polypeptide: MQLSPSEISGLIKQRIEKFDNSVELKSEGTIVSVADGIVTIYGLNDVAAGEMIKLPGDVYGLALNLNTDSVGAVVLGDYEHIKEGDKAYCTGRILEVPVGEALLGRVVDALGNPIDGKGEVATDLTSPIEKIAPGVIWRKSVDQALQTGIKSIDSMVPIGRGQRELIIGDRQIGKTAIAVDTIINQKGTGVKCIYVAIGQKASTIANIVRQLEEHGAMEHAIIVAATASDSAALQYIAPYAGCSMGEYFRDRGQDALIVYDDLTKQAWAYRQISLLLRRPPGREAYPGDVFYLHSRLLERAARVNEEYVEKFTNGEVKGKTGSLTALPIIETQAGDISAFVPTNVISITDGQIFLETDLFNSGLRPAINPGNSVSRVGGAAQTKIIKKLGGGIRLALAQYRELEAFSQFASDLDEATRAQLNRGQRVTELLKQKQFSTLSVALMALSLYAADNGYLDNLEVSEVIPFESALHALAETKYSDVIAEINETGKYDADIADKLKIIVEDCKANQAW.

169-176 (GDRQIGKT) lines the ATP pocket.

Belongs to the ATPase alpha/beta chains family. F-type ATPases have 2 components, CF(1) - the catalytic core - and CF(0) - the membrane proton channel. CF(1) has five subunits: alpha(3), beta(3), gamma(1), delta(1), epsilon(1). CF(0) has three main subunits: a(1), b(2) and c(9-12). The alpha and beta chains form an alternating ring which encloses part of the gamma chain. CF(1) is attached to CF(0) by a central stalk formed by the gamma and epsilon chains, while a peripheral stalk is formed by the delta and b chains.

The protein localises to the cell inner membrane. The enzyme catalyses ATP + H2O + 4 H(+)(in) = ADP + phosphate + 5 H(+)(out). In terms of biological role, produces ATP from ADP in the presence of a proton gradient across the membrane. The alpha chain is a regulatory subunit. The polypeptide is ATP synthase subunit alpha (Francisella tularensis subsp. tularensis (strain SCHU S4 / Schu 4)).